Consider the following 165-residue polypeptide: Thiol peroxidase (165 aa).

The Thioredoxin domain occupies 17–165 (PQVGEIVENF…NYEAALAVLA (149 aa)). Cys-59 functions as the Cysteine sulfenic acid (-SOH) intermediate in the catalytic mechanism. Cys-59 and Cys-93 are disulfide-bonded.

It belongs to the peroxiredoxin family. Tpx subfamily. As to quaternary structure, homodimer.

The enzyme catalyses a hydroperoxide + [thioredoxin]-dithiol = an alcohol + [thioredoxin]-disulfide + H2O. In terms of biological role, thiol-specific peroxidase that catalyzes the reduction of hydrogen peroxide and organic hydroperoxides to water and alcohols, respectively. Plays a role in cell protection against oxidative stress by detoxifying peroxides. This chain is Thiol peroxidase, found in Haemophilus influenzae (strain ATCC 51907 / DSM 11121 / KW20 / Rd).